A 516-amino-acid polypeptide reads, in one-letter code: Threonine synthase 2, chloroplastic (516 aa).

The N-terminal 33 residues, 1–33, are a transit peptide targeting the chloroplast; the sequence is MASFSLPHSATYFPSHSETSLKPHSAASFTVRC. Over residues 1–37 the composition is skewed to polar residues; the sequence is MASFSLPHSATYFPSHSETSLKPHSAASFTVRCTSAS. Residues 1–55 are disordered; the sequence is MASFSLPHSATYFPSHSETSLKPHSAASFTVRCTSASPAVPPQTPQKPRRSPDEN. Residues 133–135, 156–158, asparagine 163, leucine 164, lysine 172, and asparagine 178 each bind S-adenosyl-L-methionine; these read PYG and SAF. Position 194 is an N6-(pyridoxal phosphate)lysine (lysine 194). Residues 326 to 330 and threonine 464 contribute to the pyridoxal 5'-phosphate site; that span reads GNLGN.

The protein belongs to the threonine synthase family. In terms of assembly, homodimer. Pyridoxal 5'-phosphate serves as cofactor.

Its subcellular location is the plastid. The protein localises to the chloroplast. The enzyme catalyses O-phospho-L-homoserine + H2O = L-threonine + phosphate. It functions in the pathway amino-acid biosynthesis; L-threonine biosynthesis; L-threonine from L-aspartate: step 5/5. Allosterically activated by S-adenosyl-methionine (SAM). Functionally, catalyzes the gamma-elimination of phosphate from L-phosphohomoserine and the beta-addition of water to produce L-threonine. In Arabidopsis thaliana (Mouse-ear cress), this protein is Threonine synthase 2, chloroplastic (TS2).